The following is a 134-amino-acid chain: Ribulose bisphosphate carboxylase small subunit (134 aa).

The protein belongs to the RuBisCO small chain family. Heterohexadecamer of 8 large and 8 small subunits.

Its function is as follows. RuBisCO catalyzes two reactions: the carboxylation of D-ribulose 1,5-bisphosphate, the primary event in carbon dioxide fixation, as well as the oxidative fragmentation of the pentose substrate. Both reactions occur simultaneously and in competition at the same active site. Although the small subunit is not catalytic it is essential for maximal activity. This is Ribulose bisphosphate carboxylase small subunit from Bradyrhizobium diazoefficiens (strain JCM 10833 / BCRC 13528 / IAM 13628 / NBRC 14792 / USDA 110).